Here is a 460-residue protein sequence, read N- to C-terminus: MAKTGVFDSDPTAIAKAKELKREMKKLLIKIDDEDDLGVQTIDQLQDALSALREATMRKMAKSSSLEMLETVSCPEEFRCPLSNELMRDPVVLASGQTYDKLFIQKWLSSGNRTCPKTQQVLPHTALTPNLLIREMISKWCKKNGLETKSQYHPNLVNEDETVTRSDREIFNSLLCKVSSSNLQDQKSAAKELRLLTRKGTEFRALFGESPDEITRLVNPLLHGSNPDEKLQEDVVTTLLNISIHDDSNKKLVCENPNVIPLLIDALRRGTVATRSNAAAAIFTLSALDSNKVLIGKSGILKPLIDLLEEGNPLAIKDVAAAIFTLCIAHENRSRAVRDGAVRVLGKKISNGLYVDELLAILAMLVTHWKAVEELGELGGVSWLLKITRESECKRNKENAIVILHTICFSDRTKWKEIKEEENAHGTITKLSREGTSRAQRKANGILDRLRKAMNLTHTA.

The U-box domain maps to 73 to 147 (SCPEEFRCPL…SKWCKKNGLE (75 aa)). ARM repeat units follow at residues 201–244 (TEFR…NISI), 248–287 (SNKKLVCENPNVIPLLIDALRRGTVATRSNAAAAIFTLSA), and 289–328 (DSNKVLIGKSGILKPLIDLLEEGNPLAIKDVAAAIFTLCI).

Binds to SD11, SD16, SD17, SD18, SD113, SD129 and SD25. Phosphorylated by SD1-6 and SD1-7.

The protein resides in the nucleus. It is found in the cell membrane. The catalysed reaction is S-ubiquitinyl-[E2 ubiquitin-conjugating enzyme]-L-cysteine + [acceptor protein]-L-lysine = [E2 ubiquitin-conjugating enzyme]-L-cysteine + N(6)-ubiquitinyl-[acceptor protein]-L-lysine.. Its pathway is protein modification; protein ubiquitination. Functionally, functions as an E3 ubiquitin ligase. May be involved in the abscisic acid-mediated signaling pathway, at least during germination. This Arabidopsis thaliana (Mouse-ear cress) protein is U-box domain-containing protein 9 (PUB9).